The chain runs to 265 residues: Interleukin-2 receptor subunit alpha (265 aa).

The signal sequence occupies residues 1–21 (MDSYLLMWGLLTLIMVPGCFA). Residues 22–84 (ELCDDDPPEI…SWDNQCQCTS (63 aa)) enclose the Sushi 1 domain. At 22–240 (ELCDDDPPEI…ETFIFTTEYQ (219 aa)) the chain is on the extracellular side. 3 disulfides stabilise this stretch: Cys24–Cys67, Cys49–Cys80, and Cys51–Cys82. N-linked (GlcNAc...) asparagine glycosylation is found at Asn70 and Asn89. Polar residues predominate over residues 87-98 (TRNTTKQVTPQP). A disordered region spans residues 87–123 (TRNTTKQVTPQPEEQKERKTTEMQSPMQPVDQASLPG). In terms of domain architecture, Sushi 2 spans 123 to 186 (GHCREPPPWE…WTQPQLICTG (64 aa)). Cystine bridges form between Cys125/Cys168 and Cys152/Cys184. The disordered stretch occupies residues 190–210 (TSQFPGEEKPQASPEGRPESE). The segment covering 195–209 (GEEKPQASPEGRPES) has biased composition (basic and acidic residues). The chain crosses the membrane as a helical span at residues 241-259 (VAVAGCVFLLISVLLLSGL). Topologically, residues 260–265 (TWQRRQ) are cytoplasmic.

Non-covalent dimer of an alpha and a beta subunit. IL2R exists in 3 different forms: a high affinity dimer, an intermediate affinity monomer (beta subunit), and a low affinity monomer (alpha subunit). The high and intermediate affinity forms also associate with a gamma subunit.

Its subcellular location is the membrane. In terms of biological role, receptor for interleukin-2. The receptor is involved in the regulation of immune tolerance by controlling regulatory T cells (TREGs) activity. TREGs suppress the activation and expansion of autoreactive T-cells. The polypeptide is Interleukin-2 receptor subunit alpha (IL2RA) (Pan troglodytes (Chimpanzee)).